A 271-amino-acid chain; its full sequence is Tryptophan synthase alpha chain (271 aa).

Active-site proton acceptor residues include glutamate 49 and aspartate 60.

This sequence belongs to the TrpA family. Tetramer of two alpha and two beta chains.

The catalysed reaction is (1S,2R)-1-C-(indol-3-yl)glycerol 3-phosphate + L-serine = D-glyceraldehyde 3-phosphate + L-tryptophan + H2O. The protein operates within amino-acid biosynthesis; L-tryptophan biosynthesis; L-tryptophan from chorismate: step 5/5. The alpha subunit is responsible for the aldol cleavage of indoleglycerol phosphate to indole and glyceraldehyde 3-phosphate. The chain is Tryptophan synthase alpha chain from Burkholderia lata (strain ATCC 17760 / DSM 23089 / LMG 22485 / NCIMB 9086 / R18194 / 383).